A 206-amino-acid polypeptide reads, in one-letter code: GTP-binding protein YPTC5 (206 aa).

Residue 15–22 coordinates GTP; it reads GDSGVGKT. The Effector region signature appears at 37–45; sequence YKATIGADF. GTP is bound by residues 63-67 and 125-128; these read DTAGQ and NKID. S-geranylgeranyl cysteine attachment occurs at residues C205 and C206.

It belongs to the small GTPase superfamily. Rab family.

It localises to the cell membrane. Protein transport. Probably involved in vesicular traffic. This chain is GTP-binding protein YPTC5 (YPTC5), found in Chlamydomonas reinhardtii (Chlamydomonas smithii).